Reading from the N-terminus, the 298-residue chain is Probable alpha-L-glutamate ligase (298 aa).

In terms of domain architecture, ATP-grasp spans 104–287 (MQLLSRHGIG…VAGKIIEFLE (184 aa)). ATP contacts are provided by residues Lys-141, 178-179 (EY), Asp-187, and 211-213 (RSN). Residues Asp-248, Glu-260, and Asn-262 each contribute to the Mg(2+) site. Asp-248, Glu-260, and Asn-262 together coordinate Mn(2+).

Belongs to the RimK family. Mg(2+) serves as cofactor. Requires Mn(2+) as cofactor.

This Aeromonas salmonicida (strain A449) protein is Probable alpha-L-glutamate ligase.